A 231-amino-acid polypeptide reads, in one-letter code: Probable glutathione S-transferase GSTU1 (231 aa).

One can recognise a GST N-terminal domain in the interval 5–84; that stretch reads KELVLLDFWV…YLDDAFPGTP (80 aa). Glutathione contacts are provided by residues serine 15, lysine 42, isoleucine 56, and 68-69; that span reads ES. The region spanning 97–220 is the GST C-terminal domain; that stretch reads AAYARATARF…LPSPEKVYDF (124 aa).

Belongs to the GST superfamily. Tau family.

The enzyme catalyses RX + glutathione = an S-substituted glutathione + a halide anion + H(+). Functionally, conjugation of reduced glutathione to a wide number of exogenous and endogenous hydrophobic electrophiles. This chain is Probable glutathione S-transferase GSTU1 (GSTU1), found in Oryza sativa subsp. japonica (Rice).